The chain runs to 371 residues: MIEIEKITLYHLSMNLKKPFKNSIETLQERKFLIVEAIDTSGVTGWGEVSAFSSPWYTEETIGTCLHMLKDFFIPNVVGREFNHPSEVPDSLARYKGNRMAKAGLESAVWDIYAKKKGVSLAEALGGTRDKVPAGVVVGLAPLDDMLKEIESYQKEGYQRIKIKIQPGQDVELVKAIRSRFPTIPLMADANSSYELKDISRLKELDDYHLMMIEQPLQADDIVDHRHLQKHLKTAICLDESICSVDDARRAIELGSCKIINIKPSRVGGLTEALKIHDLCKEHHMQVWCGGMLETGISRAQNVALASLPQFTIPGDISSSSRYWDEDIVTPDIRIDNGFISVSKQPGLGVEVNQDIMRKYVTKMDVFTQHG.

Residue Lys-164 is the Proton donor of the active site. Asp-189, Glu-214, and Asp-239 together coordinate Mg(2+). The Proton acceptor role is filled by Lys-263.

Belongs to the mandelate racemase/muconate lactonizing enzyme family. MenC type 2 subfamily. It depends on a divalent metal cation as a cofactor.

The enzyme catalyses (1R,6R)-6-hydroxy-2-succinyl-cyclohexa-2,4-diene-1-carboxylate = 2-succinylbenzoate + H2O. It functions in the pathway quinol/quinone metabolism; 1,4-dihydroxy-2-naphthoate biosynthesis; 1,4-dihydroxy-2-naphthoate from chorismate: step 4/7. It participates in quinol/quinone metabolism; menaquinone biosynthesis. Converts 2-succinyl-6-hydroxy-2,4-cyclohexadiene-1-carboxylate (SHCHC) to 2-succinylbenzoate (OSB). Does not show detectable N-acylamino acid racemase (NAAAR) activity with N-acetyl-S-methionine as substrate. In Bacillus subtilis (strain 168), this protein is o-succinylbenzoate synthase.